Reading from the N-terminus, the 140-residue chain is Holo-[acyl-carrier-protein] synthase (140 aa).

The Mg(2+) site is built by Asp-9 and Glu-63.

Belongs to the P-Pant transferase superfamily. AcpS family. Mg(2+) serves as cofactor.

It localises to the cytoplasm. It carries out the reaction apo-[ACP] + CoA = holo-[ACP] + adenosine 3',5'-bisphosphate + H(+). In terms of biological role, transfers the 4'-phosphopantetheine moiety from coenzyme A to a Ser of acyl-carrier-protein. The chain is Holo-[acyl-carrier-protein] synthase from Paraburkholderia phytofirmans (strain DSM 17436 / LMG 22146 / PsJN) (Burkholderia phytofirmans).